We begin with the raw amino-acid sequence, 307 residues long: UDP-3-O-acyl-N-acetylglucosamine deacetylase (307 aa).

3 residues coordinate Zn(2+): His78, His241, and Asp245. His268 functions as the Proton donor in the catalytic mechanism.

The protein belongs to the LpxC family. Zn(2+) serves as cofactor.

It catalyses the reaction a UDP-3-O-[(3R)-3-hydroxyacyl]-N-acetyl-alpha-D-glucosamine + H2O = a UDP-3-O-[(3R)-3-hydroxyacyl]-alpha-D-glucosamine + acetate. It functions in the pathway glycolipid biosynthesis; lipid IV(A) biosynthesis; lipid IV(A) from (3R)-3-hydroxytetradecanoyl-[acyl-carrier-protein] and UDP-N-acetyl-alpha-D-glucosamine: step 2/6. Catalyzes the hydrolysis of UDP-3-O-myristoyl-N-acetylglucosamine to form UDP-3-O-myristoylglucosamine and acetate, the committed step in lipid A biosynthesis. The polypeptide is UDP-3-O-acyl-N-acetylglucosamine deacetylase (Acidovorax sp. (strain JS42)).